A 315-amino-acid polypeptide reads, in one-letter code: Fucose-specific lectin (315 aa).

A run of 6 repeats spans residues 2-53 (STPG…KNVI), 54-103 (GNAK…GGAK), 104-155 (FQVA…LGGA), 156-207 (LPGT…TIFD), 208-260 (RAPP…ITPV), and 261-315 (IQGS…LPPA). A 6 X approximate tandem repeats region spans residues 2–315 (STPGAQQVLF…QLGRSALPPA (314 aa)). Residues Arg-25, Glu-37, Trp-44, Arg-73, Glu-85, Trp-94, Gly-98, Arg-126, Glu-138, Trp-146, Thr-150, Arg-177, Gln-189, Trp-198, Arg-230, and Gln-242 each contribute to the alpha-L-fucose site. Cys-244, Asp-246, and His-252 together coordinate Zn(2+). Alpha-L-fucose contacts are provided by Arg-282 and Glu-296.

Belongs to the fungal fucose-specific lectin family. Homodimer.

Multispecific lectin that is able to recognize L-fucose in all possible linkages. These could be found not only in decomposed plant matter in soil, which is the natural environment for A.fumigatus, but also in various epitopes on human tissues. Mediates binding of A.fumigatus conidia to airway mucin in a fucose dependent manner. Stimulates IL-8 production by human bronchial cells in a dose-dependent manner, contributing to the inflammatory response observed upon the exposure of a patient to A.fumigatus, and thus might be an important virulence factor involved in an early stage of A.fumigatus infection. This is Fucose-specific lectin from Aspergillus fumigatus (strain ATCC MYA-4609 / CBS 101355 / FGSC A1100 / Af293) (Neosartorya fumigata).